Here is a 348-residue protein sequence, read N- to C-terminus: UDP-3-O-acylglucosamine N-acyltransferase (348 aa).

H241 acts as the Proton acceptor in catalysis.

The protein belongs to the transferase hexapeptide repeat family. LpxD subfamily. As to quaternary structure, homotrimer.

It carries out the reaction a UDP-3-O-[(3R)-3-hydroxyacyl]-alpha-D-glucosamine + a (3R)-hydroxyacyl-[ACP] = a UDP-2-N,3-O-bis[(3R)-3-hydroxyacyl]-alpha-D-glucosamine + holo-[ACP] + H(+). The protein operates within bacterial outer membrane biogenesis; LPS lipid A biosynthesis. Functionally, catalyzes the N-acylation of UDP-3-O-acylglucosamine using 3-hydroxyacyl-ACP as the acyl donor. Is involved in the biosynthesis of lipid A, a phosphorylated glycolipid that anchors the lipopolysaccharide to the outer membrane of the cell. This Neisseria meningitidis serogroup B (strain ATCC BAA-335 / MC58) protein is UDP-3-O-acylglucosamine N-acyltransferase.